The sequence spans 404 residues: Probable tRNA sulfurtransferase (404 aa).

Residues 60–165 (HEVAESLKEI…DEAAYISYEN (106 aa)) enclose the THUMP domain. ATP is bound by residues 183 to 184 (ML), 208 to 209 (HF), Arg265, Gly287, and Gln296.

Belongs to the ThiI family.

The protein resides in the cytoplasm. It carries out the reaction [ThiI sulfur-carrier protein]-S-sulfanyl-L-cysteine + a uridine in tRNA + 2 reduced [2Fe-2S]-[ferredoxin] + ATP + H(+) = [ThiI sulfur-carrier protein]-L-cysteine + a 4-thiouridine in tRNA + 2 oxidized [2Fe-2S]-[ferredoxin] + AMP + diphosphate. The catalysed reaction is [ThiS sulfur-carrier protein]-C-terminal Gly-Gly-AMP + S-sulfanyl-L-cysteinyl-[cysteine desulfurase] + AH2 = [ThiS sulfur-carrier protein]-C-terminal-Gly-aminoethanethioate + L-cysteinyl-[cysteine desulfurase] + A + AMP + 2 H(+). It functions in the pathway cofactor biosynthesis; thiamine diphosphate biosynthesis. Catalyzes the ATP-dependent transfer of a sulfur to tRNA to produce 4-thiouridine in position 8 of tRNAs, which functions as a near-UV photosensor. Also catalyzes the transfer of sulfur to the sulfur carrier protein ThiS, forming ThiS-thiocarboxylate. This is a step in the synthesis of thiazole, in the thiamine biosynthesis pathway. The sulfur is donated as persulfide by IscS. The chain is Probable tRNA sulfurtransferase from Streptococcus agalactiae serotype Ia (strain ATCC 27591 / A909 / CDC SS700).